A 133-amino-acid chain; its full sequence is UPF0225 protein BB3385 (133 aa).

It belongs to the UPF0225 family.

The protein is UPF0225 protein BB3385 of Bordetella bronchiseptica (strain ATCC BAA-588 / NCTC 13252 / RB50) (Alcaligenes bronchisepticus).